Reading from the N-terminus, the 582-residue chain is Semenogelin-2 (582 aa).

The N-terminal stretch at 1–23 is a signal peptide; sequence MKSIILFVLSLLLILEKQAAVMG. 3 disordered regions span residues 25-62, 91-190, and 272-553; these read KGGS…SKGS, HKTT…QGGS, and NLNQ…FSGA. The segment covering 50–59 has biased composition (basic and acidic residues); that stretch reads GQKDKQHTES. The segment covering 92-134 has biased composition (basic residues); the sequence is KTTKSKQHLRRHQRLLNYKQKGRGRVKPKRHFHLIVIHRKGGQ. Polar residues-rich tracts occupy residues 137–161 and 174–190; these read HGTQ…QYSN and EQAS…QGGS. The segment covering 293–305 has biased composition (basic and acidic residues); that stretch reads TEERQPNHEEKSV. Positions 325–335 are enriched in polar residues; that stretch reads KSQNQVTIPSQ. Residues 336 to 345 are compositionally biased toward basic and acidic residues; it reads DQEHGHKENK. Polar residues predominate over residues 385 to 395; that stretch reads KSQNQVAIPSQ. Over residues 396–405 the composition is skewed to basic and acidic residues; it reads DQEHGHKENK. Polar residues predominate over residues 445–455; the sequence is KSQNQVTIPSQ. Over residues 456–465 the composition is skewed to basic and acidic residues; sequence DQEHGHKENK. Polar residues-rich tracts occupy residues 487–498 and 506–529; these read KDVSQSSLSFQT and SQIQ…NSGK. A compositionally biased stretch (basic and acidic residues) spans 530-546; sequence SADRKQDLLSHEQEGRY.

This sequence belongs to the semenogelin family. Interacts with SERPINA5.

It localises to the secreted. Its function is as follows. Participates in the formation of a gel matrix (sperm coagulum) entrapping the accessory gland secretions and ejaculated spermatozoa. This Macaca fascicularis (Crab-eating macaque) protein is Semenogelin-2 (SEMG2).